The chain runs to 373 residues: Chaperone protein DnaJ (373 aa).

The region spanning 4-68 (NYYQILGVSK…QKRAAYDRLG (65 aa)) is the J domain. The CR-type zinc-finger motif lies at 136–214 (GIEKNINFSS…CHGMGRYHKQ (79 aa)). Zn(2+) is bound by residues Cys149, Cys152, Cys166, Cys169, Cys188, Cys191, Cys202, and Cys205. 4 CXXCXGXG motif repeats span residues 149 to 156 (CNTCHGSG), 166 to 173 (CDACSGVG), 188 to 195 (CHKCQGNG), and 202 to 209 (CKKCHGMG).

It belongs to the DnaJ family. As to quaternary structure, homodimer. It depends on Zn(2+) as a cofactor.

It localises to the cytoplasm. In terms of biological role, participates actively in the response to hyperosmotic and heat shock by preventing the aggregation of stress-denatured proteins and by disaggregating proteins, also in an autonomous, DnaK-independent fashion. Unfolded proteins bind initially to DnaJ; upon interaction with the DnaJ-bound protein, DnaK hydrolyzes its bound ATP, resulting in the formation of a stable complex. GrpE releases ADP from DnaK; ATP binding to DnaK triggers the release of the substrate protein, thus completing the reaction cycle. Several rounds of ATP-dependent interactions between DnaJ, DnaK and GrpE are required for fully efficient folding. Also involved, together with DnaK and GrpE, in the DNA replication of plasmids through activation of initiation proteins. This Rickettsia rickettsii (strain Sheila Smith) protein is Chaperone protein DnaJ.